Reading from the N-terminus, the 266-residue chain is Integral membrane protein 2B (266 aa).

Topologically, residues 1-54 (MVKVTFNSALAQKEAKKXEPKSGEEALIIPPDTXAVDCKDPDEVVPVGQRRAWC) are cytoplasmic. A helical; Signal-anchor for type II membrane protein transmembrane segment spans residues 55-75 (WCMCFGLAFMLAGVILGGAYL). Residues 76–266 (YKYFALQPDD…KFAVETLICS (191 aa)) are Lumenal-facing. Positions 102–134 (EPPANAPAARYQTIEENIKIFEEDGVEFISVPV) are necessary for interaction with APP and inhibitor effects on APP processing. The BRICHOS domain maps to 137 to 231 (FADSDPANIV…LCHDKETYKL (95 aa)). 2 disulfide bridges follow: Cys-164/Cys-223 and Cys-248/Cys-265. N-linked (GlcNAc...) asparagine glycosylation occurs at Asn-170.

The protein belongs to the ITM2 family. Homodimer; disulfide-linked. Interacts with SPPL2A and SPPL2B. Interacts with APP. Mature BRI2 (mBRI2) interacts with the APP amyloid-beta A4 protein; the interaction occurs at the cell surface and in the endocytic compartments and enable alpha- and beta-secretase-induced APP cleavage inhibition. Mature BRI2 (mBRI2) interacts with the APP C99; the interaction occurs in the endocytic compartments and enable gamma-secretase-induced C99 cleavage inhibition. May form heterodimers with Bri23 peptide and APP amyloid-beta protein 40. Interacts with ADAM7 in sperm; the interaction increases following capacitation. In terms of processing, the ectodomain C-terminal part of the imBRI2 is processed by furin producing a secreted Bri23 peptide and a mature BRI2, membrane form (mBRI2). The remaining part of the ectodomain of mBRI2 containing the BRICHOS domain is cleaved by ADAM10 and is secreted (BRI2C, soluble form). The membrane-bound N-terminal fragment (BRI2C, membrane form) is further proteolytically processed by SPPL2A and SPPL2B through regulated intramembrane proteolysis producing a secreted C-peptide and a BRI2 intracellular domain (BRI2 ICD) released in the cytosol. Shedding by ADAM10 facilitates intramembrane cleavage but is not absolutely required for BRI2 ICD generation. Glycosylation at Asn-170 is important for cell surface localization, but doesn't affect furin- and ADAM10-induced proteolytic processing.

The protein resides in the golgi apparatus membrane. The protein localises to the cell membrane. Its subcellular location is the endosome membrane. It is found in the secreted. Plays a regulatory role in the processing of the amyloid-beta A4 precursor protein (APP) and acts as an inhibitor of the amyloid-beta peptide aggregation and fibrils deposition. Plays a role in the induction of neurite outgrowth. Functions as a protease inhibitor by blocking access of secretases to APP cleavage sites. Its function is as follows. Mature BRI2 (mBRI2) functions as a modulator of the amyloid-beta A4 precursor protein (APP) processing leading to a strong reduction in the secretion of secretase-processed amyloid-beta protein 40 and amyloid-beta protein 42. In terms of biological role, bri23 peptide prevents aggregation of APP amyloid-beta protein 42 into toxic oligomers. The chain is Integral membrane protein 2B (ITM2B) from Sus scrofa (Pig).